Reading from the N-terminus, the 763-residue chain is Ras and Rab interactor 1 (763 aa).

Residue Met1 is modified to N-acetylmethionine. Residues 1 to 52 (MEDPGETGAHPLGATNLNFVPGHQQKEKPSTDPLYDTPDTRGVQAGGSQQPA) are disordered. A Phosphotyrosine; by ABL1 and ABL2 modification is found at Tyr35. The 84-residue stretch at 68–151 (WLQLRANAAA…QLICGYCRTR (84 aa)) folds into the SH2 domain. 3 disordered regions span residues 177 to 200 (LNTK…RSPQ), 238 to 273 (STET…PPRQ), and 301 to 331 (QEVD…RPRH). Phosphoserine occurs at positions 198, 246, 319, and 323. Over residues 245–257 (LSPPAVPPPPVPV) the composition is skewed to pro residues. Positions 316–326 (SSGSPTTSPRL) are enriched in low complexity. At Ser340 the chain carries Phosphoserine; by PKD/PRKD1. The VPS9 domain maps to 445 to 587 (LSADGSLGRL…LSGLSQARAL (143 aa)). Ser598 carries the post-translational modification Phosphoserine. A Ras-associating domain is found at 613–695 (FQHLLRVAYQ…GYLIYRRAER (83 aa)). The residue at position 681 (Arg681) is an Omega-N-methylarginine. The segment at 698-763 (TQGAVAEKAK…KAEGSQALEE (66 aa)) is disordered. Over residues 727–755 (REGKPRIAVDQEGKDQARGGHIGPEEQKA) the composition is skewed to basic and acidic residues.

Belongs to the RIN (Ras interaction/interference) family. In terms of assembly, interacts with the GTP-bound form of Ras proteins (NRAS, HRAS and KRAS). This interaction prevents the association between RAF1 and Ras. Interacts with 14-3-3 proteins YWHAB, YWHAE and YWHAZ when phosphorylated on Ser-340. Interacts with the SH3 domain of ABL1 and ABL2. Interacts with RAB5A. The interaction with Ras is probably regulated and antagonized by the interaction with 14-3-3 proteins. The interaction with 14-3-3 proteins is regulated by phosphorylation on Ser-340. Post-translationally, phosphorylated on tyrosine residues by ABL1 and ABL2. Phosphorylation at Ser-340 by PRKD1 induces interaction with 14-3-3 proteins. In terms of tissue distribution, highly expressed in brain. Weakly or no expressed in other tissues, except in testis, where it is expressed at intermediate level. In brain, it is mainly expressed in postnatal forebrain neurons in which it is localized in dendrites and colocalizes with Ras.

The protein localises to the cytoplasm. The protein resides in the membrane. It localises to the cytoskeleton. Its function is as follows. Ras effector protein, which may serve as an inhibitory modulator of neuronal plasticity in aversive memory formation. Can affect Ras signaling at different levels. First, by competing with RAF1 protein for binding to activated Ras. Second, by enhancing signaling from ABL1 and ABL2, which regulate cytoskeletal remodeling. Third, by activating RAB5A, possibly by functioning as a guanine nucleotide exchange factor (GEF) for RAB5A, by exchanging bound GDP for free GTP, and facilitating Ras-activated receptor endocytosis. The protein is Ras and Rab interactor 1 (Rin1) of Mus musculus (Mouse).